A 182-amino-acid polypeptide reads, in one-letter code: Bifunctional dihydrofolate reductase-thymidylate synthase (182 aa).

The DHFR domain maps to 1–182 (AICACCKVLN…YFTRINNAYT (182 aa)). Position 25–31 (25–31 (GLGNAGG)) interacts with NADP(+). A substrate-binding site is contributed by Asp40. NADP(+)-binding positions include 93–95 (KTS) and 114–117 (LSRT). The substrate site is built by Ile154, Tyr160, and Thr175. Residue 155 to 162 (GGASVYKE) coordinates NADP(+).

This sequence in the N-terminal section; belongs to the dihydrofolate reductase family. In the C-terminal section; belongs to the thymidylate synthase family. As to quaternary structure, homodimer.

It catalyses the reaction (6S)-5,6,7,8-tetrahydrofolate + NADP(+) = 7,8-dihydrofolate + NADPH + H(+). The enzyme catalyses dUMP + (6R)-5,10-methylene-5,6,7,8-tetrahydrofolate = 7,8-dihydrofolate + dTMP. Its pathway is cofactor biosynthesis; tetrahydrofolate biosynthesis; 5,6,7,8-tetrahydrofolate from 7,8-dihydrofolate: step 1/1. Functionally, bifunctional enzyme. Involved in de novo dTMP biosynthesis. Key enzyme in folate metabolism. Catalyzes an essential reaction for de novo glycine and purine synthesis, DNA precursor synthesis, and for the conversion of dUMP to dTMP. The chain is Bifunctional dihydrofolate reductase-thymidylate synthase from Plasmodium vinckei.